The primary structure comprises 339 residues: Cathepsin L-like peptidase (339 aa).

An N-terminal signal peptide occupies residues 1–16; that stretch reads MKILILLVAFVAAANA. The propeptide at 17-121 is activation peptide; that stretch reads VSLYELVKEE…VTFIEPANVE (105 aa). The N-linked (GlcNAc...) asparagine glycan is linked to Asn-95. Intrachain disulfides connect Cys-143–Cys-186, Cys-177–Cys-219, and Cys-278–Cys-328. Residue Cys-146 is part of the active site. Catalysis depends on residues His-285 and Asn-306.

It belongs to the peptidase C1 family. Dimer of a heavy and a light chain linked by disulfide bonds. Interacts with cystatin; the interaction results in inhibition of cathepsin L-like peptidase activity. As to expression, salivary gland. Midgut.

The enzyme catalyses Specificity close to that of papain. As compared to cathepsin B, cathepsin L exhibits higher activity toward protein substrates, but has little activity on Z-Arg-Arg-NHMec, and no peptidyl-dipeptidase activity.. More active in the presence of a reducing agent DTT. In terms of biological role, proteinase exhibiting preference for Leu, Val and Phe residues at the P2 position. The polypeptide is Cathepsin L-like peptidase (Aedes aegypti (Yellowfever mosquito)).